We begin with the raw amino-acid sequence, 197 residues long: Small ribosomal subunit protein uS2 (197 aa).

Belongs to the universal ribosomal protein uS2 family.

The polypeptide is Small ribosomal subunit protein uS2 (rps2) (Archaeoglobus fulgidus (strain ATCC 49558 / DSM 4304 / JCM 9628 / NBRC 100126 / VC-16)).